We begin with the raw amino-acid sequence, 478 residues long: UDP-N-acetylmuramate--L-alanine ligase (478 aa).

130–136 is a binding site for ATP; it reads GTHGKTT.

Belongs to the MurCDEF family.

It localises to the cytoplasm. The catalysed reaction is UDP-N-acetyl-alpha-D-muramate + L-alanine + ATP = UDP-N-acetyl-alpha-D-muramoyl-L-alanine + ADP + phosphate + H(+). Its pathway is cell wall biogenesis; peptidoglycan biosynthesis. Functionally, cell wall formation. This Microcystis aeruginosa (strain NIES-843 / IAM M-2473) protein is UDP-N-acetylmuramate--L-alanine ligase.